The sequence spans 606 residues: Urocanate reductase (606 aa).

The tat-type signal signal peptide spans 1–40 (MSNLSRRNFITGGAIAALGGTLAIAGCAPKGESSSTVAGA). An FMN phosphoryl threonine modification is found at Thr111. FAD is bound by residues Ala163, Glu182, Thr191, Gly195, Gly196, Ala197, Ala305, and Asp373. Arg433 acts as the Proton donor in catalysis. Residues Glu572 and Ile588 each contribute to the FAD site.

The protein belongs to the FAD-dependent oxidoreductase 2 family. FRD/SDH subfamily. FAD is required as a cofactor. The cofactor is FMN. Post-translationally, predicted to be exported by the Tat system. The position of the signal peptide cleavage has not been experimentally proven.

It catalyses the reaction dihydrourocanate + A = urocanate + AH2. Its function is as follows. Catalyzes the two-electron reduction of urocanate to dihydrourocanate (also named imidazole propionate or deamino-histidine). Dihydrourocanate is present at higher concentrations in subjects with type 2 diabetes, and directly impairs glucose tolerance and insulin signaling at the level of insulin receptor substrate (IRS) through activation of p38 gamma (MAPK12)-p62-mTORC1. Therefore, the UrdA enzyme from the gut bacteria E.lenta strain DSM 2243 may contribute to the pathogenesis of type 2 diabetes by producing the microbial metabolite dihydrourocanate. The chain is Urocanate reductase from Eggerthella lenta (strain ATCC 25559 / DSM 2243 / CCUG 17323 / JCM 9979 / KCTC 3265 / NCTC 11813 / VPI 0255 / 1899 B) (Eubacterium lentum).